The chain runs to 289 residues: Porin (289 aa).

In terms of assembly, homotrimer.

The protein resides in the cell outer membrane. Functionally, forms channels that allow the passive diffusion of small hydrophilic solutes up to an exclusion limit of about 0.6 kDa. This chain is Porin (opmA), found in Fuscovulum blasticum (Rhodobacter blasticus).